Here is a 388-residue protein sequence, read N- to C-terminus: Glutamate 5-kinase (388 aa).

Residue K21 participates in ATP binding. Positions 61, 148, and 160 each coordinate substrate. Residues 180 to 181 (TD) and 222 to 228 (TGGMITK) each bind ATP. One can recognise a PUA domain in the interval 285–363 (RGSVFLDPGA…RWLARELGAE (79 aa)).

This sequence belongs to the glutamate 5-kinase family.

The protein localises to the cytoplasm. It carries out the reaction L-glutamate + ATP = L-glutamyl 5-phosphate + ADP. It functions in the pathway amino-acid biosynthesis; L-proline biosynthesis; L-glutamate 5-semialdehyde from L-glutamate: step 1/2. Its function is as follows. Catalyzes the transfer of a phosphate group to glutamate to form L-glutamate 5-phosphate. The sequence is that of Glutamate 5-kinase from Thermobifida fusca (strain YX).